A 314-amino-acid chain; its full sequence is Olfactory receptor 5P81 (314 aa).

At 1–28 (MAFLEDGNHTVVTEFILLGLTDDPVLRV) the chain is on the extracellular side. An N-linked (GlcNAc...) asparagine glycan is attached at Asn8. Residues 29 to 49 (ILFIIILCIYLVTVSGNLSTI) form a helical membrane-spanning segment. Residues 50-57 (LLIRVSSQ) lie on the Cytoplasmic side of the membrane. The helical transmembrane segment at 58–78 (LHHPMYFFLSHLASIDIAISS) threads the bilayer. The Extracellular portion of the chain corresponds to 79–102 (SVTPNMVVNFLVERSSISYIGCGI). Cys100 and Cys192 are oxidised to a cystine. Residues 103–123 (QLGSAVFFGAIECFLLAVMAY) traverse the membrane as a helical segment. Residues 124-136 (DRFVAICNPLLYS) are Cytoplasmic-facing. The chain crosses the membrane as a helical span at residues 137 to 157 (TKMSKQVCIQLLVGSYIGGFI). Over 158–199 (HASFFTLSFVSFLFCGPNRINHFFCDFTPLVELSCSDNSVLI) the chain is Extracellular. Residues 200 to 220 (ILDSFSTGTIIVITVFVIAIS) traverse the membrane as a helical segment. Residues 221 to 240 (YTCILITILKMHSTEGRHKA) lie on the Cytoplasmic side of the membrane. The chain crosses the membrane as a helical span at residues 241 to 261 (FSTCTSHLTVVTLLYGTVTFI). The Extracellular portion of the chain corresponds to 262-274 (YVMPKSSYSTDQN). A helical membrane pass occupies residues 275-295 (KVISVFYMVVIPMLNPIIYSL). At 296-314 (RNNEIKGALKKQLGEKNIF) the chain is on the cytoplasmic side.

It belongs to the G-protein coupled receptor 1 family.

Its subcellular location is the cell membrane. Functionally, potential odorant receptor. The polypeptide is Olfactory receptor 5P81 (Mus musculus (Mouse)).